A 66-amino-acid polypeptide reads, in one-letter code: Large ribosomal subunit protein bL31 (66 aa).

Zn(2+) contacts are provided by Cys-16, Cys-18, Cys-36, and Cys-39.

The protein belongs to the bacterial ribosomal protein bL31 family. Type A subfamily. Part of the 50S ribosomal subunit. The cofactor is Zn(2+).

Binds the 23S rRNA. In Campylobacter jejuni subsp. jejuni serotype O:6 (strain 81116 / NCTC 11828), this protein is Large ribosomal subunit protein bL31.